A 40-amino-acid polypeptide reads, in one-letter code: Protamine-1 (40 aa).

The tract at residues 1 to 40 is disordered; the sequence is MPPRRKRVSSAPRRRRRTYRRTTAHKHQDRPVHRRRRRRH.

Testis.

Its subcellular location is the nucleus. It is found in the chromosome. Its function is as follows. Protamines substitute for histones in the chromatin of sperm during the haploid phase of spermatogenesis. They compact sperm DNA into a highly condensed, stable and inactive complex. The chain is Protamine-1 (PBP1) from Bufo japonicus (Japanese common toad).